Consider the following 370-residue polypeptide: MRVFTTGQLLGTVVAVQANFYKVQLDQDVREPGSRGAGEEVHLDSPLPLYPLSLLLCTRRTRLKKIGQQVMVGDRVVVEEPDWAGGRGAIAEVLSRQTQLDRPPIANADQILLVFAVADPPLEPYQLSRFLVKAETTGLDVVLCLNKSDLVSPEIQQQISDRLLAWGYQPLFISVEKQINIDQIAKYLSNKITVVAGPSGVGKSSLINALIPDINLRVGEVSGKLARGRHTTRHVELFELPNGGLLADTPGFNQPDVDCSPEELVHYFPEARERLAVASCRFNDCLHRDEPDCAVRGDWERYEHYLEFLADAIARQTQLYQQADPESTLKLKTKGKGQSQYEPKLESKKYRRTSRRTQVQGLQDLYQEEE.

The CP-type G domain occupies 97 to 255; that stretch reads QTQLDRPPIA…LADTPGFNQP (159 aa). Residues 146-149 and 197-205 each bind GTP; these read NKSD and GPSGVGKSS. Zn(2+) is bound by residues Cys280, Cys285, His287, and Cys293. The interval 328–370 is disordered; it reads TLKLKTKGKGQSQYEPKLESKKYRRTSRRTQVQGLQDLYQEEE.

Belongs to the TRAFAC class YlqF/YawG GTPase family. RsgA subfamily. As to quaternary structure, monomer. Associates with 30S ribosomal subunit, binds 16S rRNA. It depends on Zn(2+) as a cofactor.

Its subcellular location is the cytoplasm. In terms of biological role, one of several proteins that assist in the late maturation steps of the functional core of the 30S ribosomal subunit. Helps release RbfA from mature subunits. May play a role in the assembly of ribosomal proteins into the subunit. Circularly permuted GTPase that catalyzes slow GTP hydrolysis, GTPase activity is stimulated by the 30S ribosomal subunit. This Trichormus variabilis (strain ATCC 29413 / PCC 7937) (Anabaena variabilis) protein is Small ribosomal subunit biogenesis GTPase RsgA.